The chain runs to 477 residues: Glycogen synthase (477 aa).

Lys-15 lines the ADP-alpha-D-glucose pocket.

Belongs to the glycosyltransferase 1 family. Bacterial/plant glycogen synthase subfamily.

The enzyme catalyses [(1-&gt;4)-alpha-D-glucosyl](n) + ADP-alpha-D-glucose = [(1-&gt;4)-alpha-D-glucosyl](n+1) + ADP + H(+). Its pathway is glycan biosynthesis; glycogen biosynthesis. Functionally, synthesizes alpha-1,4-glucan chains using ADP-glucose. The sequence is that of Glycogen synthase from Edwardsiella ictaluri (strain 93-146).